A 515-amino-acid chain; its full sequence is Interferon-induced, double-stranded RNA-activated protein kinase (515 aa).

Ala-2 is subject to N-acetylalanine. Residues 8–76 (FYMDKLNKYR…AKLAVDILDN (69 aa)) form the DRBM 1 domain. Lys-68 participates in a covalent cross-link: Glycyl lysine isopeptide (Lys-Gly) (interchain with G-Cter in ISG15). Thr-84 is subject to Phosphothreonine. Residues 95–162 (NYIGLVNSFA…AKEAYQKLLK (68 aa)) enclose the DRBM 2 domain. Position 96 is a phosphotyrosine; by autocatalysis (Tyr-96). Lys-154 participates in a covalent cross-link: Glycyl lysine isopeptide (Lys-Gly) (interchain with G-Cter in ISG15). Position 157 is a phosphotyrosine; by autocatalysis (Tyr-157). Residues 204 to 224 (ENVFTNGLGENKRKSGVKVSP) are disordered. The residue at position 233 (Thr-233) is a Phosphothreonine. The interval 241–515 (DFEDIEEIGL…ISEKKKRNTC (275 aa)) is interaction with TRAF5. The Protein kinase domain maps to 242 to 504 (FEDIEEIGLG…EILKTLAEWR (263 aa)). Residue 248 to 256 (IGLGGFGQV) coordinates ATP. The residue at position 268 (Tyr-268) is a Phosphotyrosine; by autocatalysis. ATP is bound at residue Lys-271. Asp-376 (proton acceptor) is an active-site residue. Phosphothreonine; by autocatalysis is present on residues Thr-409 and Thr-414. Residue Ser-419 is modified to Phosphoserine.

This sequence belongs to the protein kinase superfamily. Ser/Thr protein kinase family. GCN2 subfamily. In terms of assembly, homodimer. Interacts with DNAJC3 and STRBP. Forms a complex with FANCA, FANCC, FANCG and HSP70. Interacts with ADAR/ADAR1. The inactive form interacts with NCK1. Interacts (via the kinase catalytic domain) with STAT3 (via SH2 domain), TRAF2 (C-terminus), TRAF5 (C-terminus) and TRAF6 (C-terminus). Interacts with MAP2K6, TARBP2, NLRP1, NLRC4 and AIM2. Interacts (via DRBM 1 domain) with DUS2L (via DRBM domain). Interacts with DHX9 (via N-terminus) and this interaction is dependent upon activation of the kinase. The inactive form interacts with GSN. Interacts with IKBKB/IKKB, NPM1, NLRP3 and IRS1. Autophosphorylated on several Ser, Thr and Tyr residues. Autophosphorylation of Thr-414 is dependent on Thr-409 and is stimulated by dsRNA binding and dimerization. Autophosphorylation apparently leads to the activation of the kinase. Tyrosine autophosphorylation is essential for efficient dsRNA-binding, dimerization, and kinase activation. In terms of tissue distribution, expressed in heart, lung, brain, kidney, testes, thymus and bone marrow.

It is found in the cytoplasm. Its subcellular location is the nucleus. The protein resides in the perinuclear region. The catalysed reaction is L-seryl-[protein] + ATP = O-phospho-L-seryl-[protein] + ADP + H(+). It catalyses the reaction L-threonyl-[protein] + ATP = O-phospho-L-threonyl-[protein] + ADP + H(+). It carries out the reaction L-tyrosyl-[protein] + ATP = O-phospho-L-tyrosyl-[protein] + ADP + H(+). Its activity is regulated as follows. Initially produced in an inactive form and is activated by binding to viral dsRNA, which causes dimerization and autophosphorylation in the activation loop and stimulation of function. ISGylation can activate it in the absence of viral infection. Can also be activated by heparin, pro-inflammatory stimuli, growth factors, cytokines, oxidative stress and the cellular protein PRKRA. Activity is markedly stimulated by manganese ions. Activation is blocked by the cellular proteins TARBP2, DUS2L, NPM1, NCK1 and ADAR. Its function is as follows. IFN-induced dsRNA-dependent serine/threonine-protein kinase that phosphorylates the alpha subunit of eukaryotic translation initiation factor 2 (EIF2S1/eIF-2-alpha) and plays a key role in the innate immune response to viral infection. Inhibits viral replication via the integrated stress response (ISR): EIF2S1/eIF-2-alpha phosphorylation in response to viral infection converts EIF2S1/eIF-2-alpha in a global protein synthesis inhibitor, resulting to a shutdown of cellular and viral protein synthesis, while concomitantly initiating the preferential translation of ISR-specific mRNAs, such as the transcriptional activator ATF4. Exerts its antiviral activity on a wide range of DNA and RNA viruses including west nile virus (WNV), sindbis virus (SV), foot-and-mouth virus (FMDV), semliki Forest virus (SFV) and lymphocytic choriomeningitis virus (LCMV). Also involved in the regulation of signal transduction, apoptosis, cell proliferation and differentiation: phosphorylates other substrates including p53/TP53, PPP2R5A, DHX9, ILF3, and IRS1. In addition to serine/threonine-protein kinase activity, also has tyrosine-protein kinase activity and phosphorylates CDK1 at 'Tyr-4' upon DNA damage, facilitating its ubiquitination and proteasomal degradation. Either as an adapter protein and/or via its kinase activity, can regulate various signaling pathways (p38 MAP kinase, NF-kappa-B and insulin signaling pathways) and transcription factors (JUN, STAT1, STAT3, IRF1, ATF3) involved in the expression of genes encoding pro-inflammatory cytokines and IFNs. Activates the NF-kappa-B pathway via interaction with IKBKB and TRAF family of proteins and activates the p38 MAP kinase pathway via interaction with MAP2K6. Can act as both a positive and negative regulator of the insulin signaling pathway (ISP). Negatively regulates ISP by inducing the inhibitory phosphorylation of insulin receptor substrate 1 (IRS1) at 'Ser-312' and positively regulates ISP via phosphorylation of PPP2R5A which activates FOXO1, which in turn up-regulates the expression of insulin receptor substrate 2 (IRS2). Can regulate NLRP3 inflammasome assembly and the activation of NLRP3, NLRP1, AIM2 and NLRC4 inflammasomes. Plays a role in the regulation of the cytoskeleton by binding to gelsolin (GSN), sequestering the protein in an inactive conformation away from actin. The chain is Interferon-induced, double-stranded RNA-activated protein kinase (Eif2ak2) from Mus musculus (Mouse).